We begin with the raw amino-acid sequence, 367 residues long: UDP-N-acetylglucosamine--N-acetylmuramyl-(pentapeptide) pyrophosphoryl-undecaprenol N-acetylglucosamine transferase (367 aa).

UDP-N-acetyl-alpha-D-glucosamine contacts are provided by residues T15–G17, N127, R163, S191, I249, and Q294.

It belongs to the glycosyltransferase 28 family. MurG subfamily.

It localises to the cell inner membrane. The enzyme catalyses di-trans,octa-cis-undecaprenyl diphospho-N-acetyl-alpha-D-muramoyl-L-alanyl-D-glutamyl-meso-2,6-diaminopimeloyl-D-alanyl-D-alanine + UDP-N-acetyl-alpha-D-glucosamine = di-trans,octa-cis-undecaprenyl diphospho-[N-acetyl-alpha-D-glucosaminyl-(1-&gt;4)]-N-acetyl-alpha-D-muramoyl-L-alanyl-D-glutamyl-meso-2,6-diaminopimeloyl-D-alanyl-D-alanine + UDP + H(+). It participates in cell wall biogenesis; peptidoglycan biosynthesis. Its function is as follows. Cell wall formation. Catalyzes the transfer of a GlcNAc subunit on undecaprenyl-pyrophosphoryl-MurNAc-pentapeptide (lipid intermediate I) to form undecaprenyl-pyrophosphoryl-MurNAc-(pentapeptide)GlcNAc (lipid intermediate II). This chain is UDP-N-acetylglucosamine--N-acetylmuramyl-(pentapeptide) pyrophosphoryl-undecaprenol N-acetylglucosamine transferase, found in Burkholderia mallei (strain NCTC 10247).